The following is a 56-amino-acid chain: Small ribosomal subunit protein uS14 (56 aa).

Residues cysteine 21, cysteine 24, cysteine 39, and cysteine 42 each contribute to the Zn(2+) site.

This sequence belongs to the universal ribosomal protein uS14 family. In terms of assembly, component of the 40S small ribosomal subunit. Requires Zn(2+) as cofactor.

The protein resides in the cytoplasm. It is found in the cytosol. Its subcellular location is the rough endoplasmic reticulum. Its function is as follows. Component of the small ribosomal subunit. The ribosome is a large ribonucleoprotein complex responsible for the synthesis of proteins in the cell. The protein is Small ribosomal subunit protein uS14 (rps29) of Hippocampus comes (Tiger tail seahorse).